The chain runs to 147 residues: DNA-directed RNA polymerase subunit 6 homolog (147 aa).

Belongs to the archaeal RpoK/eukaryotic RPB6 RNA polymerase subunit family. Part of the viral DNA-directed RNA polymerase that consists of 8 polII-like subunits (RPB1, RPB2, RPB3, RPB5, RPB6, RPB7, RPB9, RPB10), a capping enzyme and a termination factor.

It localises to the host cytoplasm. The protein localises to the virion. Its function is as follows. Component of the DNA-directed RNA polymerase (RNAP) that catalyzes the transcription in the cytoplasm of viral DNA into RNA using the four ribonucleoside triphosphates as substrates. This is DNA-directed RNA polymerase subunit 6 homolog from Ornithodoros (relapsing fever ticks).